A 77-amino-acid polypeptide reads, in one-letter code: Translation initiation factor IF-1, chloroplastic (77 aa).

Residues 1-72 (MKKQNLIEME…TKGRITYRLR (72 aa)) form the S1-like domain.

The protein belongs to the IF-1 family. Component of the 30S ribosomal translation pre-initiation complex which assembles on the 30S ribosome in the order IF-2 and IF-3, IF-1 and N-formylmethionyl-tRNA(fMet); mRNA recruitment can occur at any time during PIC assembly.

It is found in the plastid. The protein localises to the chloroplast. Functionally, one of the essential components for the initiation of protein synthesis. Stabilizes the binding of IF-2 and IF-3 on the 30S subunit to which N-formylmethionyl-tRNA(fMet) subsequently binds. Helps modulate mRNA selection, yielding the 30S pre-initiation complex (PIC). Upon addition of the 50S ribosomal subunit IF-1, IF-2 and IF-3 are released leaving the mature 70S translation initiation complex. The chain is Translation initiation factor IF-1, chloroplastic from Zygnema circumcarinatum (Green alga).